The primary structure comprises 260 residues: Thiazole synthase (260 aa).

Lysine 96 serves as the catalytic Schiff-base intermediate with DXP. 1-deoxy-D-xylulose 5-phosphate contacts are provided by residues glycine 157, 184–185, and 206–207; these read AG and NT.

Belongs to the ThiG family. Homotetramer. Forms heterodimers with either ThiH or ThiS.

The protein localises to the cytoplasm. The catalysed reaction is [ThiS sulfur-carrier protein]-C-terminal-Gly-aminoethanethioate + 2-iminoacetate + 1-deoxy-D-xylulose 5-phosphate = [ThiS sulfur-carrier protein]-C-terminal Gly-Gly + 2-[(2R,5Z)-2-carboxy-4-methylthiazol-5(2H)-ylidene]ethyl phosphate + 2 H2O + H(+). Its pathway is cofactor biosynthesis; thiamine diphosphate biosynthesis. Catalyzes the rearrangement of 1-deoxy-D-xylulose 5-phosphate (DXP) to produce the thiazole phosphate moiety of thiamine. Sulfur is provided by the thiocarboxylate moiety of the carrier protein ThiS. In vitro, sulfur can be provided by H(2)S. The chain is Thiazole synthase from Nitrobacter hamburgensis (strain DSM 10229 / NCIMB 13809 / X14).